The sequence spans 262 residues: Phosphonates import ATP-binding protein PhnC (262 aa).

Residues 5 to 253 (IRVEKLAKTF…RFDHLYRSIN (249 aa)) form the ABC transporter domain. Residue 37-44 (GPSGSGKS) participates in ATP binding.

It belongs to the ABC transporter superfamily. Phosphonates importer (TC 3.A.1.9.1) family. In terms of assembly, the complex is composed of two ATP-binding proteins (PhnC), two transmembrane proteins (PhnE) and a solute-binding protein (PhnD).

The protein localises to the cell inner membrane. The enzyme catalyses phosphonate(out) + ATP + H2O = phosphonate(in) + ADP + phosphate + H(+). Functionally, part of the ABC transporter complex PhnCDE involved in phosphonates import. Responsible for energy coupling to the transport system. This chain is Phosphonates import ATP-binding protein PhnC, found in Escherichia coli O6:H1 (strain CFT073 / ATCC 700928 / UPEC).